The sequence spans 88 residues: Small ribosomal subunit protein bS20 (88 aa).

Belongs to the bacterial ribosomal protein bS20 family.

Functionally, binds directly to 16S ribosomal RNA. In Rhodopseudomonas palustris (strain BisA53), this protein is Small ribosomal subunit protein bS20.